We begin with the raw amino-acid sequence, 609 residues long: Autophagy-related protein 22-1 (609 aa).

4 helical membrane passes run 95–115 (YYAG…GVEI), 117–137 (TASF…ILII), 151–171 (LLLV…LGVV), and 176–196 (MVGA…FVLL). Residues 214 to 238 (AREPPPALDGSRAQEGHSDTTNDID) are disordered. The segment covering 225–238 (RAQEGHSDTTNDID) has biased composition (basic and acidic residues). An N-linked (GlcNAc...) asparagine glycan is attached at N244. The helical transmembrane segment at 287 to 307 (IGIGYIGAIILQIVCILVVIA) threads the bilayer. An N-linked (GlcNAc...) asparagine glycan is attached at N309. 3 helical membrane-spanning segments follow: residues 317–337 (LVLF…ALWL), 381–401 (ILLF…VSGT), and 415–435 (AALG…AFSW). N-linked (GlcNAc...) asparagine glycosylation is present at N443. Helical transmembrane passes span 450–470 (IIAC…GFIP), 487–509 (FPLG…SFFG), 522–542 (ALYA…VGII), and 552–572 (AFVF…LVDV).

The protein belongs to the ATG22 family.

Its subcellular location is the vacuole membrane. In terms of biological role, vacuolar effluxer which mediate the efflux of amino acids resulting from autophagic degradation. The release of autophagic amino acids allows the maintenance of protein synthesis and viability during nitrogen starvation. The chain is Autophagy-related protein 22-1 (atg22-1) from Neosartorya fischeri (strain ATCC 1020 / DSM 3700 / CBS 544.65 / FGSC A1164 / JCM 1740 / NRRL 181 / WB 181) (Aspergillus fischerianus).